A 1096-amino-acid polypeptide reads, in one-letter code: Inactive phospholipase C-like protein 1 (1096 aa).

The disordered stretch occupies residues 1 to 101; the sequence is MAEGAASREA…KKTVSFSSMP (101 aa). Serine 48 carries the phosphoserine modification. A compositionally biased stretch (low complexity) spans 49–60; it reads GVALPGAAGVPA. Serine 78 carries the phosphoserine modification. Residues 83 to 222 form an interaction with PPP1C region; sequence PSNQKCGGRK…NIWVSGLRYL (140 aa). A Phosphothreonine modification is found at threonine 94. Threonine 94 is subject to Phosphothreonine; by PKA. The residue at position 96 (serine 96) is a Phosphoserine; by PKA. A PH domain is found at 114–224; that stretch reads SFMQAGCELK…WVSGLRYLVS (111 aa). The PI-PLC X-box domain maps to 399-543; it reads QDMTQPLSHY…LKNMIIVKGK (145 aa). Residues 544–568 form an interaction with GABA A beta subunit region; sequence KLPSESDLLEGEVTDEDEEAEMSRR. The segment covering 550-563 has biased composition (acidic residues); that stretch reads DLLEGEVTDEDEEA. The segment at 550-569 is disordered; the sequence is DLLEGEVTDEDEEAEMSRRM. A Phosphothreonine modification is found at threonine 557. Serine 570 bears the Phosphoserine mark. One can recognise a PI-PLC Y-box domain in the interval 586–702; sequence LSDLVSICKS…GYVLRPSIMR (117 aa). The 130-residue stretch at 702 to 831 folds into the C2 domain; that stretch reads RDEVSYFSAN…PGYRHVPLRS (130 aa). Positions 1040 to 1060 form a coiled coil; that stretch reads DLLKNAKNEAVENIKQIQLAC. The tract at residues 1067-1096 is disordered; it reads KGPGGGSEAKGKRSLEAIEEKESSEENGKL. Basic and acidic residues predominate over residues 1075 to 1096; it reads AKGKRSLEAIEEKESSEENGKL. Position 1080 is a phosphoserine (serine 1080).

In terms of assembly, interacts with PPP2CA, Ins(1,4,5)P3, Ins(1,4,5,6)P4 GABARAP, GABA receptor beta subunits, GABA receptor gamma-2 subunits and PPP1C. May form a ternary complex with GABA receptor beta subunit and GABARAP. The formation of a ternary complex with GABA receptor beta subunit and GABARAP could be the key step for facilitating the association of GABARAP with the GABA receptor gamma-2 subunit and to allow it to be transported at the right destination. Post-translationally, phosphorylated by the catalytic subunit of PKA. Phosphorylation of Thr-94 resulted in dissociation of PPP1C from PRIP1.

It localises to the cytoplasm. Involved in an inositol phospholipid-based intracellular signaling cascade. Shows no PLC activity to phosphatidylinositol 4,5-bisphosphate and phosphatidylinositol. Component in the phospho-dependent endocytosis process of GABA A receptor. Acts as an inhibitor of PPP1C. Involved in the assembly and/or the trafficking of gamma-2 subunit-containing GABA A receptors. This chain is Inactive phospholipase C-like protein 1 (Plcl1), found in Mus musculus (Mouse).